A 286-amino-acid polypeptide reads, in one-letter code: Phycobilisome 32.1 kDa linker polypeptide, phycocyanin-associated, rod (286 aa).

The 179-residue stretch at alanine 2–arginine 180 folds into the PBS-linker domain. Positions aspartate 234–alanine 286 constitute a CpcD-like domain.

This sequence belongs to the phycobilisome linker protein family.

Its subcellular location is the cellular thylakoid membrane. Its function is as follows. Rod linker protein, associated with phycocyanin. Linker polypeptides determine the state of aggregation and the location of the disk-shaped phycobiliprotein units within the phycobilisome and modulate their spectroscopic properties in order to mediate a directed and optimal energy transfer. In Mastigocladus laminosus (Fischerella sp.), this protein is Phycobilisome 32.1 kDa linker polypeptide, phycocyanin-associated, rod (cpcC).